The following is a 546-amino-acid chain: uncharacterized protein (546 aa).

The next 10 membrane-spanning stretches (helical) occupy residues Trp-106–Tyr-126, Thr-145–Leu-165, Phe-172–Ala-192, Tyr-231–Gly-251, Trp-263–Phe-283, Leu-332–Ile-352, Gly-375–Ile-395, Leu-416–Thr-436, Trp-444–Val-464, and Trp-510–Tyr-530.

This sequence belongs to the major facilitator superfamily. CAR1 family.

The protein localises to the endoplasmic reticulum membrane. This is an uncharacterized protein from Schizosaccharomyces pombe (strain 972 / ATCC 24843) (Fission yeast).